A 546-amino-acid polypeptide reads, in one-letter code: Inosine-5'-monophosphate dehydrogenase (546 aa).

2 CBS domains span residues 135–197 (FILD…VTAI) and 198–254 (MSTD…PLAS). Residues 292-294 (DSS) and 342-344 (GMG) each bind NAD(+). K(+) is bound by residues G344 and G346. S347 contributes to the IMP binding site. C349 is a binding site for K(+). Residue C349 is the Thioimidate intermediate of the active site. Residues 382 to 384 (DGG), 405 to 406 (GG), and 430 to 434 (YRGMG) each bind IMP. The Proton acceptor role is filled by R460. Position 472 (Q472) interacts with IMP. Residues E531 and G532 each coordinate K(+).

It belongs to the IMPDH/GMPR family. As to quaternary structure, homotetramer. Requires K(+) as cofactor.

It localises to the cytoplasm. It carries out the reaction IMP + NAD(+) + H2O = XMP + NADH + H(+). It participates in purine metabolism; XMP biosynthesis via de novo pathway; XMP from IMP: step 1/1. With respect to regulation, mycophenolic acid (MPA) is a non-competitive inhibitor that prevents formation of the closed enzyme conformation by binding to the same site as the amobile flap. In contrast, mizoribine monophosphate (MZP) is a competitive inhibitor that induces the closed conformation. MPA is a potent inhibitor of mammalian IMPDHs but a poor inhibitor of the bacterial enzymes. MZP is a more potent inhibitor of bacterial IMPDH. Catalyzes the conversion of inosine 5'-phosphate (IMP) to xanthosine 5'-phosphate (XMP), the first committed and rate-limiting step in the de novo synthesis of guanine nucleotides, and therefore plays an important role in the regulation of cell growth. This chain is Inosine-5'-monophosphate dehydrogenase, found in Aspergillus fumigatus (strain ATCC MYA-4609 / CBS 101355 / FGSC A1100 / Af293) (Neosartorya fumigata).